Here is a 170-residue protein sequence, read N- to C-terminus: Transcription factor E (170 aa).

The 93-residue stretch at Met1–Arg93 folds into the HTH TFE/IIEalpha-type domain.

The protein belongs to the TFE family. As to quaternary structure, monomer. Interaction with RNA polymerase subunits RpoF and RpoE is necessary for Tfe stimulatory transcription activity. Able to interact with Tbp and RNA polymerase in the absence of DNA promoter. Interacts both with the preinitiation and elongation complexes.

Its function is as follows. Transcription factor that plays a role in the activation of archaeal genes transcribed by RNA polymerase. Facilitates transcription initiation by enhancing TATA-box recognition by TATA-box-binding protein (Tbp), and transcription factor B (Tfb) and RNA polymerase recruitment. Not absolutely required for transcription in vitro, but particularly important in cases where Tbp or Tfb function is not optimal. It dynamically alters the nucleic acid-binding properties of RNA polymerases by stabilizing the initiation complex and destabilizing elongation complexes. Seems to translocate with the RNA polymerase following initiation and acts by binding to the non template strand of the transcription bubble in elongation complexes. This is Transcription factor E from Pyrobaculum islandicum (strain DSM 4184 / JCM 9189 / GEO3).